The chain runs to 486 residues: Malonate-semialdehyde dehydrogenase (486 aa).

NAD(+)-binding residues include Phe154, Lys178, Glu181, Arg182, and Ser231. Catalysis depends on Cys286, which acts as the Nucleophile. Residue Glu386 coordinates NAD(+).

It belongs to the aldehyde dehydrogenase family. IolA subfamily. As to quaternary structure, homotetramer.

The catalysed reaction is 3-oxopropanoate + NAD(+) + CoA + H2O = hydrogencarbonate + acetyl-CoA + NADH + H(+). It carries out the reaction 2-methyl-3-oxopropanoate + NAD(+) + CoA + H2O = propanoyl-CoA + hydrogencarbonate + NADH + H(+). Its pathway is polyol metabolism; myo-inositol degradation into acetyl-CoA; acetyl-CoA from myo-inositol: step 7/7. Functionally, catalyzes the oxidation of malonate semialdehyde (MSA) and methylmalonate semialdehyde (MMSA) into acetyl-CoA and propanoyl-CoA, respectively. Is involved in a myo-inositol catabolic pathway. Bicarbonate, and not CO2, is the end-product of the enzymatic reaction. The sequence is that of Malonate-semialdehyde dehydrogenase from Bacillus cereus (strain ATCC 14579 / DSM 31 / CCUG 7414 / JCM 2152 / NBRC 15305 / NCIMB 9373 / NCTC 2599 / NRRL B-3711).